The following is a 152-amino-acid chain: Deoxyuridine 5'-triphosphate nucleotidohydrolase (152 aa).

Substrate is bound by residues 71-73 (RSG), asparagine 84, and 88-90 (TVD).

This sequence belongs to the dUTPase family. The cofactor is Mg(2+).

It catalyses the reaction dUTP + H2O = dUMP + diphosphate + H(+). Its pathway is pyrimidine metabolism; dUMP biosynthesis; dUMP from dCTP (dUTP route): step 2/2. In terms of biological role, this enzyme is involved in nucleotide metabolism: it produces dUMP, the immediate precursor of thymidine nucleotides and it decreases the intracellular concentration of dUTP so that uracil cannot be incorporated into DNA. The polypeptide is Deoxyuridine 5'-triphosphate nucleotidohydrolase (Maricaulis maris (strain MCS10) (Caulobacter maris)).